A 116-amino-acid chain; its full sequence is RNA guanine-N7 methyltransferase activating subunit (116 aa).

Positions M1–R55 are interaction with RNMT. Positions K31–Y116 are disordered. Residues Q36 to D42 carry the RNMT-activating domain motif. The interval D56–Y116 is RNA-binding. Residues Q67–Y78 show a composition bias toward low complexity. Polar residues predominate over residues Y97–R110.

It belongs to the RAM family.

The protein localises to the nucleus. Regulatory subunit of the mRNA-capping methyltransferase RNMT:RAMAC complex that methylates the N7 position of the added guanosine to the 5'-cap structure of mRNAs. Promotes the recruitment of the methyl donor, S-adenosyl-L-methionine, to RNMT. Regulates RNMT expression by a post-transcriptional stabilizing mechanism. Binds RNA. The sequence is that of RNA guanine-N7 methyltransferase activating subunit (ramac) from Xenopus tropicalis (Western clawed frog).